Reading from the N-terminus, the 228-residue chain is MDMFQGDIGKSVVEVLERLCCEIDSPEQQICCGQPAYNSGYVKESKNAMKRMITAFEHADYVVSPSGSCVYMFKEYPEIFKGDPLWASKAKALAAKTYEFTEFIVHVLKIEDVGAHLEGKATYHTSCHMTRLLGVNEAPIKLLQNVDGLQYVELPGKDRCCGFGGTFSVKMGNISGEMVQEKVHHVEETGADYLIGADAGCLINMGGRIHRQGKPIKVMHIAEVLNCR.

Belongs to the LutA/YkgE family.

In terms of biological role, is involved in L-lactate degradation and allows cells to grow with lactate as the sole carbon source. The protein is Lactate utilization protein A of Lysinibacillus sphaericus (strain C3-41).